Consider the following 419-residue polypeptide: S-adenosylmethionine synthase (419 aa).

Histidine 14 contributes to the ATP binding site. Aspartate 16 lines the Mg(2+) pocket. Glutamate 42 is a binding site for K(+). Positions 55 and 98 each coordinate L-methionine. The flexible loop stretch occupies residues glutamine 98–arginine 108. ATP-binding positions include aspartate 164–lysine 166, lysine 242–phenylalanine 243, aspartate 251, arginine 257–lysine 258, alanine 274, and lysine 278. Aspartate 251 contributes to the L-methionine binding site. Lysine 282 contacts L-methionine.

Belongs to the AdoMet synthase family. Homotetramer; dimer of dimers. The cofactor is Mg(2+). Requires K(+) as cofactor.

It is found in the cytoplasm. It carries out the reaction L-methionine + ATP + H2O = S-adenosyl-L-methionine + phosphate + diphosphate. It functions in the pathway amino-acid biosynthesis; S-adenosyl-L-methionine biosynthesis; S-adenosyl-L-methionine from L-methionine: step 1/1. Its function is as follows. Catalyzes the formation of S-adenosylmethionine (AdoMet) from methionine and ATP. The overall synthetic reaction is composed of two sequential steps, AdoMet formation and the subsequent tripolyphosphate hydrolysis which occurs prior to release of AdoMet from the enzyme. In Christiangramia forsetii (strain DSM 17595 / CGMCC 1.15422 / KT0803) (Gramella forsetii), this protein is S-adenosylmethionine synthase.